Here is a 324-residue protein sequence, read N- to C-terminus: ATP phosphoribosyltransferase regulatory subunit (324 aa).

This sequence belongs to the class-II aminoacyl-tRNA synthetase family. HisZ subfamily. Heteromultimer composed of HisG and HisZ subunits.

It localises to the cytoplasm. It functions in the pathway amino-acid biosynthesis; L-histidine biosynthesis; L-histidine from 5-phospho-alpha-D-ribose 1-diphosphate: step 1/9. In terms of biological role, required for the first step of histidine biosynthesis. May allow the feedback regulation of ATP phosphoribosyltransferase activity by histidine. In Carboxydothermus hydrogenoformans (strain ATCC BAA-161 / DSM 6008 / Z-2901), this protein is ATP phosphoribosyltransferase regulatory subunit.